The sequence spans 826 residues: Lethal(3)malignant brain tumor-like protein 1 (826 aa).

Ser-136 carries the post-translational modification Phosphoserine. 2 disordered regions span residues 167 to 197 and 220 to 271; these read LEPP…SGDR and LLKP…RSQL. The segment covering 242-256 has biased composition (basic and acidic residues); the sequence is EAVKQGEGKDAEREP. MBT repeat units lie at residues 280-380, 388-487, and 496-591; these read WSWE…LQLP, FSWS…LTPP, and FCWE…LEPP. The segment at 453–460 is interaction with monomethylated and dimethylated peptides; it reads FDDWGDTY. Residues 586–621 are disordered; sequence HPLEPPLRPRESSSVSPGGCPPLSHRSPPHTKTSKY. The span at 612–621 shows a compositional bias: basic residues; the sequence is SPPHTKTSKY. The segment at 619–662 adopts a CCHHC-type zinc-finger fold; that stretch reads SKYNFHHRKCPTPGCDGSGHVTGKFTAHHCLSGCPLAEKNQSRL. Zn(2+) contacts are provided by Cys-628, Cys-633, His-646, and Cys-652. The segment at 663 to 699 is disordered; the sequence is KAELSDSETAARKKNPSNLSPRKKPRHQGRIGRPPKY. A compositionally biased stretch (basic residues) spans 683 to 699; the sequence is PRKKPRHQGRIGRPPKY. The 65-residue stretch at 757 to 821 folds into the SAM domain; sequence WTIEEVFGFV…YNAILMFKNT (65 aa).

In terms of assembly, homodimer. Interacts with RB1/RB (when monomethylated at 'Lys-860'). Interacts with p53/TP53 (when monomethylated at 'Lys-382'). Interacts with CBX3, ETV6, KMT5A and VCP/p97. In terms of processing, ubiquitinated in a VCP/p97-dependent way following DNA damage, leading to its removal from DNA damage sites, promoting accessibility of H4K20me2 mark for DNA repair protein TP53BP1, which is then recruited to DNA damage sites. In terms of tissue distribution, highly expressed in brain, testis, eyes, and ES cells.

It localises to the nucleus. Its function is as follows. Polycomb group (PcG) protein that specifically recognizes and binds mono- and dimethyllysine residues on target proteins, thereby acting as a 'reader' of a network of post-translational modifications. PcG proteins maintain the transcriptionally repressive state of genes: acts as a chromatin compaction factor by recognizing and binding mono- and dimethylated histone H1b/H1-4 at 'Lys-26' (H1bK26me1 and H1bK26me2) and histone H4 at 'Lys-20' (H4K20me1 and H4K20me2), leading to condense chromatin and repress transcription. Recognizes and binds p53/TP53 monomethylated at 'Lys-382', leading to repress p53/TP53-target genes. Also recognizes and binds RB1/RB monomethylated at 'Lys-860'. Participates in the ETV6-mediated repression. Probably plays a role in cell proliferation. Overexpression induces multinucleated cells, suggesting that it is required to accomplish normal mitosis. The chain is Lethal(3)malignant brain tumor-like protein 1 (L3mbtl1) from Mus musculus (Mouse).